Reading from the N-terminus, the 622-residue chain is Telomerase-associated protein of 75 kDa (622 aa).

In terms of assembly, component of the telomerase holoenzyme complex, composed of the catalytic core (the catalytic subunit TERT, the telomerase RNA template component TER and TAP65/p65), which is associated with two heterotrimeric subcomplexes: (i) the replication protein A (RPA)-related subcomplex, composed of TEB1, RPA2/TEB2 and RPA3/TEB3 and (ii) the CST-like subcomplex, composed of TAP75/p75, TAP45/p45 and TAP19/p19. TEB1 and the CST-like subcomplex are tethered to the catalytic core by TAP50/p50.

The protein localises to the chromosome. The protein resides in the telomere. Its function is as follows. Component of a CST-like subcomplex of the holoenzyme telomerase ribonucleoprotein complex, which stimulates telomerase complementary-strand synthesis. Telomerase is an essential ribonucleoprotein enzyme that copies new telomeric repeats onto chromosome ends by repetitively synthesizing the short telomere-repeat sequence 5'-TTGGGG-3' using an RNA template component TER. The CST-like subcomplex (also named 7-4-1) binds telomeric single-stranded DNA and coordinates telomere G-strand and C-strand synthesis. This chain is Telomerase-associated protein of 75 kDa, found in Tetrahymena thermophila (strain SB210).